We begin with the raw amino-acid sequence, 133 residues long: NADH dehydrogenase [ubiquinone] 1 alpha subcomplex subunit 6 (133 aa).

The protein belongs to the complex I LYR family. As to quaternary structure, complex I is composed of at least 49 different subunits.

The protein localises to the mitochondrion inner membrane. Its function is as follows. Accessory subunit of the mitochondrial membrane respiratory chain NADH dehydrogenase (Complex I), that is believed to be not involved in catalysis. Complex I functions in the transfer of electrons from NADH to the respiratory chain. The immediate electron acceptor for the enzyme is believed to be ubiquinone. The chain is NADH dehydrogenase [ubiquinone] 1 alpha subcomplex subunit 6 from Arabidopsis thaliana (Mouse-ear cress).